Consider the following 523-residue polypeptide: ATP synthase subunit alpha (523 aa).

179–186 contacts ATP; the sequence is GDRQTGKT.

The protein belongs to the ATPase alpha/beta chains family. As to quaternary structure, F-type ATPases have 2 components, CF(1) - the catalytic core - and CF(0) - the membrane proton channel. CF(1) has five subunits: alpha(3), beta(3), gamma(1), delta(1), epsilon(1). CF(0) has three main subunits: a(1), b(2) and c(9-12). The alpha and beta chains form an alternating ring which encloses part of the gamma chain. CF(1) is attached to CF(0) by a central stalk formed by the gamma and epsilon chains, while a peripheral stalk is formed by the delta and b chains.

It localises to the cell inner membrane. The catalysed reaction is ATP + H2O + 4 H(+)(in) = ADP + phosphate + 5 H(+)(out). In terms of biological role, produces ATP from ADP in the presence of a proton gradient across the membrane. The alpha chain is a regulatory subunit. The sequence is that of ATP synthase subunit alpha from Vibrio parahaemolyticus serotype O3:K6 (strain RIMD 2210633).